Here is a 299-residue protein sequence, read N- to C-terminus: Coenzyme PQQ synthesis protein B (299 aa).

It belongs to the PqqB family.

Its pathway is cofactor biosynthesis; pyrroloquinoline quinone biosynthesis. In terms of biological role, may be involved in the transport of PQQ or its precursor to the periplasm. The protein is Coenzyme PQQ synthesis protein B of Methylorubrum extorquens (strain CM4 / NCIMB 13688) (Methylobacterium extorquens).